We begin with the raw amino-acid sequence, 347 residues long: D-alanine--D-alanine ligase (347 aa).

Positions 138 to 339 (KILCSHAGIP…YSQVIETILA (202 aa)) constitute an ATP-grasp domain. Position 171-226 (171-226 (SDRFTFPLFVKPVDAGSSFGCTFVDFFEQLPVAIEHALQHGKSAIVEPALDAPEVF)) interacts with ATP. Mg(2+) is bound by residues D296, E308, and N310.

Belongs to the D-alanine--D-alanine ligase family. Requires Mg(2+) as cofactor. Mn(2+) serves as cofactor.

Its subcellular location is the cytoplasm. The enzyme catalyses 2 D-alanine + ATP = D-alanyl-D-alanine + ADP + phosphate + H(+). It functions in the pathway cell wall biogenesis; peptidoglycan biosynthesis. Its function is as follows. Cell wall formation. This chain is D-alanine--D-alanine ligase, found in Tropheryma whipplei (strain Twist) (Whipple's bacillus).